Reading from the N-terminus, the 2788-residue chain is Multiple epidermal growth factor-like domains protein 8 (2788 aa).

The signal sequence occupies residues 1–27 (MALGGALAAALALAFAVLGPLSHKVLA). The Extracellular segment spans residues 28–2590 (GDCKGQRQVL…FFRQDQAHID (2563 aa)). 6 disulfides stabilise this stretch: C30–C57, C142–C152, C146–C158, C174–C184, C178–C191, and C193–C202. Residues 30-140 (CKGQRQVLRE…LGFNASFRFS (111 aa)) enclose the CUB 1 domain. N50 carries an N-linked (GlcNAc...) asparagine glycan. EGF-like domains follow at residues 138-168 (RFSLCPGGCQNHGQCKSPGVCVCEPGWGGPD) and 170-203 (GLQECSAYCGSHGTCASTLGPCRCEPGFLGRACD). 6 Kelch repeats span residues 241–287 (LLAV…AVAW), 290–338 (FLVL…AGHA), 346–399 (WLYV…FHAP), 402–453 (TLLV…FHTA), 459–511 (YMVV…APPS), and 525–575 (VLLV…SRDP). 3 consecutive PSI domains span residues 561–613 (YCSM…SDCQ), 847–899 (ACSS…ALCP), and 900–947 (LCEE…EECP). N1048 carries an N-linked (GlcNAc...) asparagine glycan. The 42-residue stretch at 1074-1115 (DVDECRLGLARCHPRATCLNTPLSYECHCQRGYQGDGITHCN) folds into the EGF-like 3; calcium-binding domain. 16 disulfides stabilise this stretch: C1078–C1091, C1085–C1100, C1102–C1114, C1163–C1171, C1165–C1179, C1182–C1191, C1194–C1208, C1211–C1224, C1213–C1231, C1233–C1242, C1245–C1259, C1263–C1302, C1336–C1367, C1407–C1421, C1415–C1433, and C1435–C1444. 2 consecutive Laminin EGF-like domains span residues 1163-1210 (CGCN…GCRP) and 1211-1261 (CQCN…SCFR). The CUB 2 domain occupies 1263–1405 (CGGRALLTNV…WGFNASVGSA (143 aa)). N1271 is a glycosylation site (N-linked (GlcNAc...) asparagine). T1353 carries the post-translational modification Phosphothreonine. The region spanning 1403–1445 (GSARCGSGGPGSCPVPQECVPQDGAAGAGLCRCPQGWAGPHCR) is the EGF-like 4 domain. Kelch repeat units lie at residues 1522-1570 (TLWM…SFHA), 1580-1626 (AMYL…HTLT), 1632-1678 (SLLL…SAVY), 1684-1734 (SLYV…HASA), 1739-1786 (TMVV…ESVA), and 1795-1840 (RLYI…WCHG). 4 consecutive PSI domains span residues 1819–1859 (PCRL…PPCS), 1867–1922 (ECRR…NDCR), 2003–2061 (PCHL…ESCS), and 2063–2120 (GCAQ…LSCP). N2009 carries N-linked (GlcNAc...) asparagine glycosylation. The EGF-like 5 domain maps to 2121–2159 (PEDECANGHHDCNETQNCHDQPHGYECSCKTGYTMDNVT). 2 cysteine pairs are disulfide-bonded: C2125–C2138 and C2132–C2147. N2157 and N2172 each carry an N-linked (GlcNAc...) asparagine glycan. 4 cysteine pairs are disulfide-bonded: C2196–C2204, C2198–C2213, C2216–C2225, and C2228–C2242. 2 Laminin EGF-like domains span residues 2196–2244 (CRCN…TCRP) and 2323–2386 (CQCN…QCYR). Residues 2465-2507 (HTVHIQPPPPPPPPPPPADGVPRVASDLGGLGTGSGSGSPVEP) are disordered. Residues 2470–2483 (QPPPPPPPPPPPAD) are compositionally biased toward pro residues. The chain crosses the membrane as a helical span at residues 2591 to 2611 (LFVFFSVFFSCFFLFLSLCVL). Topologically, residues 2612–2788 (LWKAKQALDQ…SQDNLTSMSL (177 aa)) are cytoplasmic. The segment covering 2761 to 2775 (GGAGGSGHGGGGGRK) has biased composition (gly residues). A disordered region spans residues 2761 to 2788 (GGAGGSGHGGGGGRKGLLSQDNLTSMSL). Polar residues predominate over residues 2779–2788 (SQDNLTSMSL).

As to expression, expressed in brain.

It localises to the membrane. Functionally, acts as a negative regulator of hedgehog signaling. This is Multiple epidermal growth factor-like domains protein 8 (Megf8) from Rattus norvegicus (Rat).